The following is a 1258-amino-acid chain: uncharacterized protein (1258 aa).

Residues 55-93 form a WD 1 repeat; sequence ELASEILGVCWQENGVLAAGISEGTWKRFLAGKQAINAE. Residues 112–128 show a composition bias toward basic and acidic residues; the sequence is GGRTKERKDTGTSRQEK. Residues 112–138 form a disordered region; that stretch reads GGRTKERKDTGTSRQEKFLSSSHPHTD. 14 WD repeats span residues 640–679, 682–721, 724–763, 766–807, 809–849, 850–889, 892–931, 934–975, 976–1017, 1019–1059, 1060–1101, 1103–1143, 1144–1183, and 1186–1227; these read ETLGNILSAAFSPEGQLLATCDTDCHVRVWEVKSGKLLLI, GHSNWVRFVVFSPDGEILASCGADENVKLWSVRDGVCIKT, GHEHEVFSVAFHPDGETLASASGDKTIKLWDIQDGTCLQT, GHTD…RTLK, HTGW…KTYI, GHTNSVYSIAYSPDSKILVSGSGDRTIKLWDCQTHICIKT, GHTNEVCSVAFSPDGQTLACVSLDQSVRLWNCRTGQCLKA, GNTD…SSLE, GHTD…QILL, HTDW…KTLS, EHSD…GILR, HSNR…KTLT, GHTNWVFDIAFSPDGKILASASHDQTVRIWDVNTGKCHHI, and GHTH…QILR.

This is an uncharacterized protein from Nostoc sp. (strain PCC 7120 / SAG 25.82 / UTEX 2576).